A 371-amino-acid chain; its full sequence is Chaperone protein DnaJ (371 aa).

Residues 5–69 (DYYEVLGLSK…QKRAQYDQFG (65 aa)) enclose the J domain. Residues 133–215 (GKELNVEIPV…CHGSSKVRKR (83 aa)) form a CR-type zinc finger. Zn(2+) is bound by residues C146, C149, C163, C166, C189, C192, C203, and C206. CXXCXGXG motif repeat units lie at residues 146–153 (CDTCKGSG), 163–170 (CKHCSGSG), 189–196 (CGHCSGTG), and 203–210 (CTTCHGSS).

Belongs to the DnaJ family. In terms of assembly, homodimer. Zn(2+) serves as cofactor.

The protein localises to the cytoplasm. Functionally, participates actively in the response to hyperosmotic and heat shock by preventing the aggregation of stress-denatured proteins and by disaggregating proteins, also in an autonomous, DnaK-independent fashion. Unfolded proteins bind initially to DnaJ; upon interaction with the DnaJ-bound protein, DnaK hydrolyzes its bound ATP, resulting in the formation of a stable complex. GrpE releases ADP from DnaK; ATP binding to DnaK triggers the release of the substrate protein, thus completing the reaction cycle. Several rounds of ATP-dependent interactions between DnaJ, DnaK and GrpE are required for fully efficient folding. Also involved, together with DnaK and GrpE, in the DNA replication of plasmids through activation of initiation proteins. This is Chaperone protein DnaJ from Bacillus cereus (strain ATCC 14579 / DSM 31 / CCUG 7414 / JCM 2152 / NBRC 15305 / NCIMB 9373 / NCTC 2599 / NRRL B-3711).